Reading from the N-terminus, the 99-residue chain is Plastocyanin (99 aa).

The region spanning 1-99 (LDVLLGGDDG…AGMVGKVTVN (99 aa)) is the Plastocyanin-like domain. 4 residues coordinate Cu cation: H37, C84, H87, and M92.

The protein belongs to the plastocyanin family. Cu(2+) serves as cofactor.

It localises to the plastid. The protein localises to the chloroplast thylakoid membrane. In terms of biological role, participates in electron transfer between P700 and the cytochrome b6-f complex in photosystem I. In Solanum tuberosum (Potato), this protein is Plastocyanin (PETE).